We begin with the raw amino-acid sequence, 1209 residues long: Protein phosphatase 1 regulatory subunit 26 (1209 aa).

Disordered stretches follow at residues 57–91, 145–279, 291–471, 501–532, 555–694, 733–836, 848–1033, 1052–1072, and 1118–1209; these read DGAA…TVHK, SGAA…HRQG, KPPR…VERS, GSDG…DSDD, GESC…EDLD, EQLG…SNDS, KAKE…FAHQ, RGGV…GLPS, and AFRE…VVKV. The span at 63–91 shows a compositional bias: basic and acidic residues; that stretch reads TSDERAAQRGHRAEGCHDARPAAKPTVHK. A compositionally biased stretch (low complexity) spans 201-219; sequence QVGSSKDQGSASPVSVSSD. A compositionally biased stretch (basic and acidic residues) spans 226–255; that stretch reads IRAEIEQFLNEKRQHETQKCDGSVEKKPDT. Over residues 301–321 the composition is skewed to polar residues; the sequence is QPRSLRSKVTTTQENEGSTKP. Residues 352 to 362 are compositionally biased toward low complexity; sequence SAAQASEASDS. Residues 442 to 454 show a composition bias toward basic and acidic residues; that stretch reads DTDHAPKLLKETK. Composition is skewed to basic and acidic residues over residues 609–637, 667–685, and 757–766; these read KMQE…RRDL, KTDE…DKSS, and SKRDSGEGPG. Low complexity-rich tracts occupy residues 821–836 and 852–861; these read PGSL…SNDS and SVSSSEVQAE. S1161 is subject to Phosphoserine. Low complexity predominate over residues 1187–1209; it reads GSDASDFSDTSTEDSGGSSVVKV.

Interacts with UTP20 and PPP1CA. Ubiquitous in normal tissues. Expressed in numerous adenocarcinoma cell lines.

It is found in the nucleus. Its subcellular location is the nucleolus. Inhibits phosphatase activity of protein phosphatase 1 (PP1) complexes. May positively regulate cell proliferation. This Homo sapiens (Human) protein is Protein phosphatase 1 regulatory subunit 26 (PPP1R26).